The primary structure comprises 324 residues: 1-deoxyxylulose-5-phosphate synthase YajO (324 aa).

Catalysis depends on Y61, which acts as the Proton donor.

The protein belongs to the aldo/keto reductase family. Aldo/keto reductase 2 subfamily.

The catalysed reaction is D-ribulose 5-phosphate + AH2 = 1-deoxy-D-xylulose 5-phosphate + A + H2O. NADH, NADPH or ATP do not increase activity. In terms of biological role, catalyzes the conversion of ribulose 5-phosphate (Ru5P) to 1-deoxy-D-xylulose 5-phosphate (DXP), providing a direct route from pentoses to terpenes. May play a role in biosynthesis of DXP under conditions of thiamine starvation. In Escherichia coli (strain K12), this protein is 1-deoxyxylulose-5-phosphate synthase YajO (yajO).